The primary structure comprises 371 residues: Poly(rC)-binding protein 3 (371 aa).

KH domains are found at residues 45 to 95, 129 to 182, and 293 to 357; these read TLTI…TITG, PVTL…TISG, and ASTH…QYLI.

The protein resides in the cytoplasm. Its function is as follows. Single-stranded nucleic acid binding protein that binds preferentially to oligo dC. This is Poly(rC)-binding protein 3 from Homo sapiens (Human).